The following is a 226-amino-acid chain: Cytidylate kinase (226 aa).

ATP is bound at residue 10–18; sequence GPASSGKST.

This sequence belongs to the cytidylate kinase family. Type 1 subfamily.

The protein resides in the cytoplasm. The enzyme catalyses CMP + ATP = CDP + ADP. It carries out the reaction dCMP + ATP = dCDP + ADP. The protein is Cytidylate kinase of Streptococcus pyogenes serotype M1.